The chain runs to 347 residues: Anthranilate phosphoribosyltransferase (347 aa).

5-phospho-alpha-D-ribose 1-diphosphate is bound by residues Gly82, 85–86 (GD), Thr90, 92–95 (NIST), 110–118 (KHGNRAITS), and Thr122. Residue Gly82 coordinates anthranilate. Residue Ser94 participates in Mg(2+) binding. Position 113 (Asn113) interacts with anthranilate. Position 168 (Arg168) interacts with anthranilate. 2 residues coordinate Mg(2+): Asp226 and Glu227.

Belongs to the anthranilate phosphoribosyltransferase family. Homodimer. Mg(2+) serves as cofactor.

It catalyses the reaction N-(5-phospho-beta-D-ribosyl)anthranilate + diphosphate = 5-phospho-alpha-D-ribose 1-diphosphate + anthranilate. It functions in the pathway amino-acid biosynthesis; L-tryptophan biosynthesis; L-tryptophan from chorismate: step 2/5. Its function is as follows. Catalyzes the transfer of the phosphoribosyl group of 5-phosphorylribose-1-pyrophosphate (PRPP) to anthranilate to yield N-(5'-phosphoribosyl)-anthranilate (PRA). In Caulobacter sp. (strain K31), this protein is Anthranilate phosphoribosyltransferase.